The chain runs to 491 residues: Iota-carrageenase (491 aa).

The signal sequence occupies residues 1–23; it reads MRLYFRKLWLTNLFLGGALASSA. 4 disulfide bridges follow: C269–C298, C336–C360, C408–C476, and C412–C484.

It belongs to the glycosyl hydrolase 82 family.

The protein localises to the secreted. The catalysed reaction is Endohydrolysis of 1,4-beta-D-linkages between D-galactose 4-sulfate and 3,6-anhydro-D-galactose-2-sulfate in iota-carrageenans.. Functionally, hydrolyzes iota-carrageenans, sulfated 1,3-alpha-1,4-beta galactans from red algal cell walls, with an inversion of anomeric configuration. Also active against hybrid iota-/nu-carrageenan, not active against kappa- or lambda-carrageenans. The chain is Iota-carrageenase from Alteromonas macleodii (Pseudoalteromonas macleodii).